A 275-amino-acid polypeptide reads, in one-letter code: Methylesterase 10 (275 aa).

The active-site Acyl-ester intermediate is Ser-96. Active-site charge relay system residues include Asp-225 and His-253.

The protein belongs to the AB hydrolase superfamily. Methylesterase family.

The catalysed reaction is methyl (-)-jasmonate + H2O = jasmonate + methanol + H(+). It participates in plant hormone biosynthesis. It functions in the pathway lipid metabolism; oxylipin biosynthesis. In terms of biological role, methylesterase shown to have methyl jasmonate (MeJA) esterase activity in vitro. In Arabidopsis thaliana (Mouse-ear cress), this protein is Methylesterase 10.